The sequence spans 164 residues: MKTYRRQLREKIIQALYTLELRDVDTDSATNWLLTKEMADDPNAMKFFNHLMKSIIDHREEIDRHIAKHTFNWDMNRIAIIDKNILRMALAEILYCEDIPPKVSINEAIEIAKKFNSTEKSSKFVNGILDAIFNDLKAEGRIQKCGRGLIDHTESKMQKSESNR.

The protein belongs to the NusB family.

Functionally, involved in transcription antitermination. Required for transcription of ribosomal RNA (rRNA) genes. Binds specifically to the boxA antiterminator sequence of the ribosomal RNA (rrn) operons. This Chlorobaculum parvum (strain DSM 263 / NCIMB 8327) (Chlorobium vibrioforme subsp. thiosulfatophilum) protein is Transcription antitermination protein NusB.